The primary structure comprises 444 residues: Protein CLP1 homolog (444 aa).

ATP-binding positions include glutamate 33, lysine 72, and 140–145 (DSGKST).

This sequence belongs to the Clp1 family. Clp1 subfamily. In terms of assembly, interacts with PCFS4 and SYM5. Forms a complex with cleavage and polyadenylation specificity factor (CPSF) subunits CPSF30, CPSF100, PCFS1, PCFS4, PCFS5, CPSF160 and FY.

Its subcellular location is the nucleus. Required for endonucleolytic cleavage during polyadenylation-dependent pre-mRNA 3'-end formation. Functions in gametophyte, embryo and postembryotic development. The chain is Protein CLP1 homolog (CLPS3) from Arabidopsis thaliana (Mouse-ear cress).